A 270-amino-acid polypeptide reads, in one-letter code: Hematopoietically-expressed homeobox protein HHEX (270 aa).

Positions 1–137 (MQYPHPGPAA…PFLQRPLHKR (137 aa)) are interaction with SOX13. Serine 53 is subject to Phosphoserine. Residues 137-196 (RKGGQVRFSNDQTIELEKKFETQKYLSPPERKRLAKMLQLSERQVKTWFQNRRAKWRRLK) constitute a DNA-binding region (homeobox). A required for WNT signaling induction region spans residues 137–270 (RKGGQVRFSN…EGDKSYFNAG (134 aa)). The tract at residues 194 to 270 (RLKQENPQSN…EGDKSYFNAG (77 aa)) is disordered. The segment covering 222–241 (PSEQNKGASLDSSQCSPSPA) has biased composition (polar residues). Over residues 244-260 (EDLESEISEDSDQEVDI) the composition is skewed to acidic residues.

Interacts with CD81; the interaction prevents nuclear translocation of HHEX. Interacts (via N-terminus) with SOX13; abolishes the SOX13-mediated inhibition of WNT-mediated transcriptional activity via competitive inhibition of the SOX13-TCF7 complex. Interacts with EIF4E; the interaction inhibits EIF4E-mediated mRNA nuclear export. Liver and promyelocytic leukemia cell line HL-60.

It is found in the nucleus. Its subcellular location is the nuclear body. The protein resides in the cytoplasm. Functionally, recognizes the DNA sequence 5'-ATTAA-3'. Transcriptional repressor. Activator of WNT-mediated transcription in conjunction with CTNNB1. Establishes anterior identity at two levels; acts early to enhance canonical WNT-signaling by repressing expression of TLE4, and acts later to inhibit NODAL-signaling by directly targeting NODAL. Inhibits EIF4E-mediated mRNA nuclear export. May play a role in hematopoietic differentiation. This is Hematopoietically-expressed homeobox protein HHEX (HHEX) from Homo sapiens (Human).